We begin with the raw amino-acid sequence, 403 residues long: Na(+)-translocating NADH-quinone reductase subunit B (403 aa).

9 consecutive transmembrane segments (helical) span residues 56–76, 121–141, 164–184, 225–245, 260–280, 287–307, 312–332, 348–368, and 371–391; these read MMII…YNVG, AYFL…EVLF, LPPS…VVLG, GFAG…NILG, GSMG…LLLT, IVAG…AIGS, MFAM…GMIF, WLFG…NPAF, and GMML…HFVV. Residue threonine 230 is modified to FMN phosphoryl threonine.

It belongs to the NqrB/RnfD family. As to quaternary structure, composed of six subunits; NqrA, NqrB, NqrC, NqrD, NqrE and NqrF. Requires FMN as cofactor.

The protein resides in the cell inner membrane. It carries out the reaction a ubiquinone + n Na(+)(in) + NADH + H(+) = a ubiquinol + n Na(+)(out) + NAD(+). Its function is as follows. NQR complex catalyzes the reduction of ubiquinone-1 to ubiquinol by two successive reactions, coupled with the transport of Na(+) ions from the cytoplasm to the periplasm. NqrA to NqrE are probably involved in the second step, the conversion of ubisemiquinone to ubiquinol. The chain is Na(+)-translocating NADH-quinone reductase subunit B from Pseudomonas paraeruginosa (strain DSM 24068 / PA7) (Pseudomonas aeruginosa (strain PA7)).